Reading from the N-terminus, the 283-residue chain is uncharacterized protein (283 aa).

A disordered region spans residues 1–21 (MSAYTHPMERELSGLSSRGNS). The helical transmembrane segment at 41–61 (SIFIASLVTFGVLMITLLIAL) threads the bilayer.

This sequence belongs to the APS1/VSP family.

The protein localises to the membrane. This is an uncharacterized protein from Arabidopsis thaliana (Mouse-ear cress).